The primary structure comprises 243 residues: Membrane selenoprotein (243 aa).

The interval 12–63 (GEDCEGGVUARPSSSSSSINNASDESTPLISKTNDEEKANIGISSTSNSPQE) is disordered. Sec20 is a non-standard amino acid (selenocysteine). 2 stretches are compositionally biased toward polar residues: residues 30–43 (INNA…LISK) and 53–63 (GISSTSNSPQE). A run of 4 helical transmembrane segments spans residues 74–94 (ILTL…PVLI), 102–122 (VSAG…LSIL), 144–164 (IKFG…FDIL), and 199–219 (VMGW…LLVG). Position 88 (Sec88) is a non-standard amino acid, selenocysteine.

The protein resides in the membrane. This Dictyostelium discoideum (Social amoeba) protein is Membrane selenoprotein (msp).